We begin with the raw amino-acid sequence, 318 residues long: Cell surface sensor SHO1 (318 aa).

Residues 1–23 (MPSYGSLHSPSLRKMEHSRGQYG) are disordered. At 1–38 (MPSYGSLHSPSLRKMEHSRGQYGGGRKGMSLGNVIGDP) the chain is on the cytoplasmic side. The chain crosses the membrane as a helical span at residues 39–59 (FALATISIAGLAWLIAFIASI). Over 60–71 (VAQIQTTQGFPT) the chain is Extracellular. Residues 72–92 (YTWWTVVFYFFLIPGVFVVVA) traverse the membrane as a helical segment. At 93-100 (SDTIQTYH) the chain is on the cytoplasmic side. A helical membrane pass occupies residues 101–121 (VALVGYMACGLVLTTSSVNGL). Over 122–130 (VYSTNGAKE) the chain is Extracellular. The helical transmembrane segment at 131-151 (AAAAGFILLSMVTIVWIFYFG) threads the bilayer. At 152–318 (SAPSAMPRAY…IAPSNYLILL (167 aa)) the chain is on the cytoplasmic side. Residues 172 to 255 (TSNNRQTMTG…AGGAADAEIV (84 aa)) form a disordered region. Positions 190-214 (ETSTSVQPPQMYTSAQLNGFENPSP) are enriched in polar residues. The segment covering 237–250 (GLPKTTTPPAGGAA) has biased composition (low complexity). In terms of domain architecture, SH3 spans 259-318 (EYPYRAKAIYTYEANPDDANEISFSKHEILEVSDVSGRWWQARKETGETGIAPSNYLILL).

This sequence belongs to the SHO1 family. In terms of assembly, forms homooligomers.

Its subcellular location is the cell membrane. In terms of biological role, MSB2 and SHO1 have overlapping functions in recognizing various surface signals for MAPK PMK1 activation and appressorium formation. While MSB2 is critical for sensing surface hydrophobicity and cutin monomers, SHO1 may play a more important role in recognizing rice leaf waxes. This is Cell surface sensor SHO1 from Pyricularia oryzae (strain 70-15 / ATCC MYA-4617 / FGSC 8958) (Rice blast fungus).